A 530-amino-acid chain; its full sequence is Arginine--tRNA ligase (530 aa).

The 'HIGH' region motif lies at 113 to 123; sequence ANPTGPLHIGH.

This sequence belongs to the class-I aminoacyl-tRNA synthetase family. As to quaternary structure, monomer.

It localises to the cytoplasm. It carries out the reaction tRNA(Arg) + L-arginine + ATP = L-arginyl-tRNA(Arg) + AMP + diphosphate. The protein is Arginine--tRNA ligase of Campylobacter jejuni subsp. jejuni serotype O:6 (strain 81116 / NCTC 11828).